We begin with the raw amino-acid sequence, 229 residues long: ATP synthase subunit a (229 aa).

Helical transmembrane passes span 25-45, 82-102, 104-124, 142-162, 181-201, and 202-222; these read ADAV…SIAA, FFPL…IGLI, GFFP…VVFV, FLGP…IGHL, LVLI…MMLM, and GVLV…IYIQ.

It belongs to the ATPase A chain family. F-type ATPases have 2 components, CF(1) - the catalytic core - and CF(0) - the membrane proton channel. CF(1) has five subunits: alpha(3), beta(3), gamma(1), delta(1), epsilon(1). CF(0) has three main subunits: a(1), b(2) and c(9-12). The alpha and beta chains form an alternating ring which encloses part of the gamma chain. CF(1) is attached to CF(0) by a central stalk formed by the gamma and epsilon chains, while a peripheral stalk is formed by the delta and b chains.

It localises to the cell inner membrane. Functionally, key component of the proton channel; it plays a direct role in the translocation of protons across the membrane. The sequence is that of ATP synthase subunit a from Geobacter sp. (strain M21).